A 181-amino-acid polypeptide reads, in one-letter code: Adenine phosphoribosyltransferase (181 aa).

The protein belongs to the purine/pyrimidine phosphoribosyltransferase family. As to quaternary structure, homodimer.

The protein localises to the cytoplasm. The catalysed reaction is AMP + diphosphate = 5-phospho-alpha-D-ribose 1-diphosphate + adenine. It functions in the pathway purine metabolism; AMP biosynthesis via salvage pathway; AMP from adenine: step 1/1. Its function is as follows. Catalyzes a salvage reaction resulting in the formation of AMP, that is energically less costly than de novo synthesis. The protein is Adenine phosphoribosyltransferase of Acidobacterium capsulatum (strain ATCC 51196 / DSM 11244 / BCRC 80197 / JCM 7670 / NBRC 15755 / NCIMB 13165 / 161).